The sequence spans 465 residues: Uronate isomerase (465 aa).

Belongs to the metallo-dependent hydrolases superfamily. Uronate isomerase family.

The catalysed reaction is D-glucuronate = D-fructuronate. It carries out the reaction aldehydo-D-galacturonate = keto-D-tagaturonate. The protein operates within carbohydrate metabolism; pentose and glucuronate interconversion. The sequence is that of Uronate isomerase from Streptococcus equi subsp. zooepidemicus (strain H70).